Here is a 202-residue protein sequence, read N- to C-terminus: Glycerol-3-phosphate acyltransferase (202 aa).

The next 6 helical transmembrane spans lie at 2-22 (MIIV…GFVI), 54-74 (FLVT…PLWL), 85-105 (FFTN…YPVY), 120-140 (VVLG…FIVL), 141-161 (KIFK…VIGS), and 162-182 (LIIQ…ILII).

The protein belongs to the PlsY family. As to quaternary structure, probably interacts with PlsX.

Its subcellular location is the cell membrane. The enzyme catalyses an acyl phosphate + sn-glycerol 3-phosphate = a 1-acyl-sn-glycero-3-phosphate + phosphate. It functions in the pathway lipid metabolism; phospholipid metabolism. Its function is as follows. Catalyzes the transfer of an acyl group from acyl-phosphate (acyl-PO(4)) to glycerol-3-phosphate (G3P) to form lysophosphatidic acid (LPA). This enzyme utilizes acyl-phosphate as fatty acyl donor, but not acyl-CoA or acyl-ACP. The polypeptide is Glycerol-3-phosphate acyltransferase (Staphylococcus aureus (strain Mu3 / ATCC 700698)).